The sequence spans 465 residues: Lysophospholipid acyltransferase 2 (465 aa).

9 consecutive transmembrane segments (helical) span residues 15 to 35 (VSVA…ISFL), 55 to 75 (FLSY…PMTI), 86 to 106 (LSGF…HVFY), 161 to 181 (SLIE…GPVF), 214 to 234 (AVFQ…QFPL), 266 to 286 (YFIW…FSGW), 356 to 376 (AVWH…ALMI), 399 to 419 (VLVL…SVGF), and 434 to 454 (VYYI…LVPV). The active site involves His-359.

Belongs to the membrane-bound acyltransferase family. Interacts with GPAT9 and DGAT1. As to expression, expressed in rosette leaves, pollen grains, developing embryos and developing seeds.

The protein localises to the endoplasmic reticulum membrane. It carries out the reaction a 1-acyl-sn-glycero-3-phosphocholine + an acyl-CoA = a 1,2-diacyl-sn-glycero-3-phosphocholine + CoA. The catalysed reaction is 1-(9Z-octadecenoyl)-sn-glycero-3-phosphocholine + (9Z)-octadecenoyl-CoA = 1,2-di-(9Z-octadecenoyl)-sn-glycero-3-phosphocholine + CoA. The enzyme catalyses 1-(9Z-octadecenoyl)-sn-glycero-3-phosphocholine + (9Z,12Z)-octadecadienoyl-CoA = 1-(9Z)-octadecenoyl-2-(9Z,12Z)-octadecadienoyl-sn-glycero-3-phosphocholine + CoA. It catalyses the reaction (9Z,12Z,15Z)-octadecatrienoyl-CoA + 1-(9Z-octadecenoyl)-sn-glycero-3-phosphocholine = 1-(9Z-octadecaenoyl)-2-(9Z,12Z,15Z-octadecatrienoyl)-sn-glycero-3-phosphocholine + CoA. It carries out the reaction a 1-acyl-sn-glycero-3-phosphoethanolamine + an acyl-CoA = a 1,2-diacyl-sn-glycero-3-phosphoethanolamine + CoA. The catalysed reaction is a 1-acyl-sn-glycero-3-phospho-L-serine + an acyl-CoA = a 1,2-diacyl-sn-glycero-3-phospho-L-serine + CoA. Lysophospholipid acyltransferase with broad specificity. Mediates the conversion of lysophosphatidylethanolamine (1-acyl-sn-glycero-3-phosphoethanolamine or LPE) into phosphatidylethanolamine (1,2-diacyl-sn-glycero-3-phosphoethanolamine or PE) (LPEAT activity). Catalyzes the acylation of lysophosphatidylserine (1-acyl-2-hydroxy-sn-glycero-3-phospho-L-serine or LPS) into phosphatidylserine (1,2-diacyl-sn-glycero-3-phospho-L-serine or PS) (LPSAT activity). Can convert lysophosphatidylcholine (1-acyl-sn-glycero-3-phosphocholine or LPC) into phosphatidylcholine (1,2-diacyl-sn-glycero-3-phosphocholine or PC) (LPCAT activity). Exhibits preference for C18-unsaturated acyl-CoA when transferring an acyl group to lysophosphatidylcholine. Can also utilize lysophosphatidylglycerol (LPG) as substrate in vitro. Has neither activity towards lysophosphatidic acid (LPA) nor lysophosphatidylinositol (LPI). Lysophospholipid acyltransferases catalyze the reacylation step of the phospholipid remodeling pathway also known as the Lands cycle. The primary function of the Lands cycle is to provide a route for acyl remodeling to modify fatty acid (FA) composition of phospholipids derived from the Kennedy pathway. Is involved in PC acyl editing and phosphocholine headgroup exchange between PC and diacylglycerols. This processes control the majority of acyl fluxes through PC to provide polyunsaturated fatty acids for triacylglycerols synthesis in seeds. Involved with LPCAT1 in the direct incorporation of newly synthesized fatty acids exported form the chloroplast into PC through acyl editing. The protein is Lysophospholipid acyltransferase 2 of Arabidopsis thaliana (Mouse-ear cress).